The primary structure comprises 658 residues: Threonine--tRNA ligase (658 aa).

The TGS domain maps to 1–64 (MSNTVSLQFP…GASGKVEIIT (64 aa)). Positions 246–548 (DHRRLGREMD…LIENFAGHMP (303 aa)) are catalytic. Zn(2+)-binding residues include C343, H394, and H525.

Belongs to the class-II aminoacyl-tRNA synthetase family. Homodimer. It depends on Zn(2+) as a cofactor.

It is found in the cytoplasm. The enzyme catalyses tRNA(Thr) + L-threonine + ATP = L-threonyl-tRNA(Thr) + AMP + diphosphate + H(+). Functionally, catalyzes the attachment of threonine to tRNA(Thr) in a two-step reaction: L-threonine is first activated by ATP to form Thr-AMP and then transferred to the acceptor end of tRNA(Thr). Also edits incorrectly charged L-seryl-tRNA(Thr). The protein is Threonine--tRNA ligase of Brucella melitensis biotype 2 (strain ATCC 23457).